Reading from the N-terminus, the 164-residue chain is Diphosphoinositol polyphosphate phosphohydrolase 3-alpha (164 aa).

Substrate is bound by residues Arg9, 17–19 (KKR), and 38–40 (SSR). Residues 17-144 (KKRAACLCFR…VHAEYLEKLK (128 aa)) enclose the Nudix hydrolase domain. The Mg(2+) site is built by Gly49 and Glu65. The Nudix box signature appears at 50 to 71 (GGMEPEEEPDGAAVREVYEEAG). Glu68 serves as the catalytic Proton acceptor. Position 69 (Glu69) interacts with Mg(2+). Substrate-binding positions include 89–91 (RKH), Arg115, and Lys133. Residues 144–164 (KLGGSPTNGNSAAPSPPESEP) form a disordered region.

It belongs to the Nudix hydrolase family. DIPP subfamily. The cofactor is Mg(2+). Requires Mn(2+) as cofactor. In terms of tissue distribution, mainly expressed in testis, liver kidney and, at lower level, in heart, brain, spleen, lung and skeletal muscle.

It localises to the cytoplasm. The catalysed reaction is diphospho-myo-inositol polyphosphate + H2O = myo-inositol polyphosphate + phosphate.. The enzyme catalyses P(1),P(6)-bis(5'-adenosyl) hexaphosphate + H2O = adenosine 5'-pentaphosphate + AMP + 2 H(+). It carries out the reaction P(1),P(5)-bis(5'-adenosyl) pentaphosphate + H2O = adenosine 5'-tetraphosphate + AMP + 2 H(+). Functionally, cleaves a beta-phosphate from the diphosphate groups in PP-InsP5 (diphosphoinositol pentakisphosphate), suggesting that it may play a role in signal transduction. Also able to catalyze the hydrolysis of dinucleoside oligophosphates, with Ap6A and Ap5A being the preferred substrates. The major reaction products are ADP and p4a from Ap6A and ADP and ATP from Ap5A. Also able to hydrolyze 5-phosphoribose 1-diphosphate; however, the relevance of such activity in vivo remains unclear. This Mus musculus (Mouse) protein is Diphosphoinositol polyphosphate phosphohydrolase 3-alpha.